The primary structure comprises 38 residues: Large ribosomal subunit protein bL36 (38 aa).

It belongs to the bacterial ribosomal protein bL36 family.

In Cupriavidus metallidurans (strain ATCC 43123 / DSM 2839 / NBRC 102507 / CH34) (Ralstonia metallidurans), this protein is Large ribosomal subunit protein bL36.